Here is a 206-residue protein sequence, read N- to C-terminus: Large ribosomal subunit protein bL25 (206 aa).

Belongs to the bacterial ribosomal protein bL25 family. CTC subfamily. In terms of assembly, part of the 50S ribosomal subunit; part of the 5S rRNA/L5/L18/L25 subcomplex. Contacts the 5S rRNA. Binds to the 5S rRNA independently of L5 and L18.

In terms of biological role, this is one of the proteins that binds to the 5S RNA in the ribosome where it forms part of the central protuberance. The protein is Large ribosomal subunit protein bL25 of Paraburkholderia phytofirmans (strain DSM 17436 / LMG 22146 / PsJN) (Burkholderia phytofirmans).